The sequence spans 378 residues: MANQPSIAERRTKVWEPYIRAKLGFRNHWYPVRLASEIAEGTPVPVKLLGEKILLNRVGGKVYAIQDRCLHRGVTLSDRVECYSKNTISCWYHGWTYRWDDGRLVDILTNPGSVQIGRRALKTFPVEEAKGLIFVYVGDGEPTPLIEDVPPGFLDENRAIHGQHRLVASNWRLGAENGFDAGHVLIHKNSILVKGNDIILPLGFAPGDPDQLTRSEVAAGKPKGVYDLLGEHSVPVFEGMIEGKPAIHGNIGSKRVAISISIWLPGVLKVEPWPDPELTQFEWYVPVDETSHLYFQTLGKVVTSKEAADSFEREFHEKWVGLALNGFNDDDIMARESMEPFYTDDRGWSEEILFEPDRAIIEWRGLASQHNRGIQEAR.

The 107-residue stretch at 29–135 (WYPVRLASEI…VEEAKGLIFV (107 aa)) folds into the Rieske domain. Positions 69, 71, 90, and 93 each coordinate [2Fe-2S] cluster.

As to quaternary structure, homotrimer. Carbazole 1,9a-dioxygenase complex consists of a terminal oxygenase component CarAa, a ferredoxin reductase component fdr and a ferredoxin component CarAc. [2Fe-2S] cluster is required as a cofactor.

It catalyses the reaction 9H-carbazole + NADH + O2 + H(+) = 2'-aminobiphenyl-2,3-diol + NAD(+). The enzyme catalyses 9H-carbazole + NADPH + O2 + H(+) = 2'-aminobiphenyl-2,3-diol + NADP(+). In terms of biological role, part of the multicomponent carbazole 1,9a-dioxygenase (CARDO), that converts carbazole (CAR) into 2-aminobiphenyl-2,3-diol. Catalyzes the dioxygenation at the angular (C-9a) and adjacent (C-1) positions of carbazole to yield a highly unstable cis-hydrodiol intermediate which is spontaneously converted to 2-aminobiphenyl-2,3-diol. This is Carbazole 1,9a-dioxygenase, terminal oxygenase component CarAa (carAa) from Sphingomonas sp.